The sequence spans 145 residues: Protein SprT-like (145 aa).

Residues 5–141 (DYVREVSLAD…CGRCHGRLIK (137 aa)) enclose the SprT-like domain. H64 lines the Zn(2+) pocket. E65 is an active-site residue. Residue H68 coordinates Zn(2+).

It belongs to the SprT family. Zn(2+) is required as a cofactor.

It is found in the cytoplasm. The chain is Protein SprT-like from Streptococcus equi subsp. zooepidemicus (strain H70).